Here is a 144-residue protein sequence, read N- to C-terminus: MGPNRIYISVGYSTFGMLVGFSAFIVWNVVYKQPWTAAMGGLSGVLALWALVTHIMYIQDYWRTWLKGLKFFMFVSSVFSLLAVAAFATFITLSVIEKQSLSDPKSFYLSAVWSFMTLKWAFLLGLYSYRYRQEFADISILSDF.

Transmembrane regions (helical) follow at residues isoleucine 6–valine 26, alanine 38–isoleucine 58, phenylalanine 71–isoleucine 91, and phenylalanine 107–tyrosine 127. The Di-leucine motif signature appears at isoleucine 140–leucine 141.

The protein belongs to the HRG family.

Its subcellular location is the endosome membrane. It localises to the lysosome membrane. The protein resides in the cytoplasmic vesicle. The protein localises to the phagosome membrane. It catalyses the reaction heme b(in) = heme b(out). In terms of biological role, heme transporter that regulates intracellular heme availability through the endosomal or lysosomal compartment. In macrophages, is the heme transporter for heme-iron recycling. Essential for macrophage iron homeostasis, transports heme from the phagolysosome to the cytoplasm during erythrophagocytosis (EP). The chain is Heme transporter hrg1-B (slc48a1a) from Danio rerio (Zebrafish).